A 77-amino-acid chain; its full sequence is Conotoxin ArMKLT2-0322 (77 aa).

The N-terminal stretch at 1–22 is a signal peptide; sequence MKLTCVLIIAVLFLIVCQLNTA. Positions 23 to 47 are excised as a propeptide; it reads DDSRDKQEYRAVRLRDAIRNSRGSR. Intrachain disulfides connect cysteine 49/cysteine 62, cysteine 56/cysteine 67, and cysteine 61/cysteine 74.

Belongs to the conotoxin O1 superfamily. Expressed by the venom duct.

Its subcellular location is the secreted. The polypeptide is Conotoxin ArMKLT2-0322 (Conus arenatus (Sand-dusted cone)).